The chain runs to 102 residues: MQKARIRLTGTDYQKVEEVCEKIKEIAERTGVNLAGPIPLPTRKLVVPIRKSPDGEGTATWDRWQMRVHKRLIDLDADERALRQLMRTQVPKDIGIEIVLES.

This sequence belongs to the universal ribosomal protein uS10 family. As to quaternary structure, part of the 30S ribosomal subunit.

Involved in the binding of tRNA to the ribosomes. The chain is Small ribosomal subunit protein uS10 from Methanospirillum hungatei JF-1 (strain ATCC 27890 / DSM 864 / NBRC 100397 / JF-1).